The following is a 78-amino-acid chain: MFPLIEFCVSNLAQGSQEAKEKLDKDPNLDVMEYGCLSYCGKCMDSPFALVNGEFVSGENAEQLVERIYAFIEENEMF.

The protein belongs to the UPF0349 family.

The sequence is that of UPF0349 protein BPUM_2879 from Bacillus pumilus (strain SAFR-032).